We begin with the raw amino-acid sequence, 157 residues long: Ribosome maturation factor RimP (157 aa).

The protein belongs to the RimP family.

The protein localises to the cytoplasm. Its function is as follows. Required for maturation of 30S ribosomal subunits. The protein is Ribosome maturation factor RimP of Thermus thermophilus (strain ATCC BAA-163 / DSM 7039 / HB27).